We begin with the raw amino-acid sequence, 208 residues long: NADH-ubiquinone oxidoreductase chain 4 (208 aa).

Helical transmembrane passes span 23–43 (VWIN…VTLW), 60–80 (SLSS…LLAS), 93–113 (KMYI…FSAN), 114–134 (ELIM…IIIT), 147–167 (LYFL…LISI), and 188–208 (PTWS…IKMP).

Belongs to the complex I subunit 4 family. In terms of assembly, core subunit of respiratory chain NADH dehydrogenase (Complex I) which is composed of 45 different subunits.

It is found in the mitochondrion inner membrane. It catalyses the reaction a ubiquinone + NADH + 5 H(+)(in) = a ubiquinol + NAD(+) + 4 H(+)(out). Its function is as follows. Core subunit of the mitochondrial membrane respiratory chain NADH dehydrogenase (Complex I) which catalyzes electron transfer from NADH through the respiratory chain, using ubiquinone as an electron acceptor. Essential for the catalytic activity and assembly of complex I. The sequence is that of NADH-ubiquinone oxidoreductase chain 4 (MT-ND4) from Phodopus sungorus (Striped hairy-footed hamster).